Reading from the N-terminus, the 263-residue chain is Glucosamine-6-phosphate deaminase (263 aa).

The active-site Proton acceptor; for enolization step is D72. D141 acts as the For ring-opening step in catalysis. H143 (proton acceptor; for ring-opening step) is an active-site residue. E148 acts as the For ring-opening step in catalysis.

The protein belongs to the glucosamine/galactosamine-6-phosphate isomerase family. NagB subfamily.

It catalyses the reaction alpha-D-glucosamine 6-phosphate + H2O = beta-D-fructose 6-phosphate + NH4(+). It participates in amino-sugar metabolism; N-acetylneuraminate degradation; D-fructose 6-phosphate from N-acetylneuraminate: step 5/5. With respect to regulation, allosterically activated by N-acetylglucosamine 6-phosphate (GlcNAc6P). Its function is as follows. Catalyzes the reversible isomerization-deamination of glucosamine 6-phosphate (GlcN6P) to form fructose 6-phosphate (Fru6P) and ammonium ion. In Porphyromonas gingivalis (strain ATCC BAA-308 / W83), this protein is Glucosamine-6-phosphate deaminase.